Here is a 150-residue protein sequence, read N- to C-terminus: Ribonuclease pancreatic delta-type (150 aa).

The N-terminal stretch at 1-25 is a signal peptide; the sequence is MGLEKSFILFSLLVLVLGWVQPSLG. R35 lines the substrate pocket. H37 acts as the Proton acceptor in catalysis. 4 disulfide bridges follow: C51–C110, C65–C121, C83–C136, and C90–C98. Residues 66 to 70 and K91 each bind substrate; that span reads KPVNT. Residue H145 is the Proton donor of the active site.

It belongs to the pancreatic ribonuclease family. As to quaternary structure, monomer.

It localises to the secreted. It catalyses the reaction an [RNA] containing cytidine + H2O = an [RNA]-3'-cytidine-3'-phosphate + a 5'-hydroxy-ribonucleotide-3'-[RNA].. It carries out the reaction an [RNA] containing uridine + H2O = an [RNA]-3'-uridine-3'-phosphate + a 5'-hydroxy-ribonucleotide-3'-[RNA].. In terms of biological role, endonuclease that catalyzes the cleavage of RNA on the 3' side of pyrimidine nucleotides. Acts on single-stranded and double-stranded RNA. This Rattus tiomanicus (Malayan field rat) protein is Ribonuclease pancreatic delta-type.